Reading from the N-terminus, the 179-residue chain is DNA utilization protein HofN (179 aa).

The chain crosses the membrane as a helical span at residues Leu-19 to Ile-39.

Its subcellular location is the cell inner membrane. Functionally, required for the use of extracellular DNA as a nutrient. The polypeptide is DNA utilization protein HofN (hofN) (Escherichia coli (strain K12)).